The chain runs to 340 residues: MSSTGKIKIGINGFGRIGRLVARVALLRDDIELVAVNDPFISTDYMTYMFKYDSVHGQWKKHEVKVKDSNTLLFGEKAVTVFGCRNPEEIPWGETGVEYVVESTGVFTDKEKAAAHIKGGAKKVVITAPSKDAPMFVVGVNEHEYKPDLAIVSNASCTTNCLAPLAKVINDRFGIVEGLMTTVHSITATQKTVDGPSNKDWRGGRGAGFNIIPSSTGAAKAVGKVLPALNGKLTGMAFRVPTPDVSVVDLTVRLEKPASYDEIKAAIKEESEGKLKGILGYTEDDVVSTDFIGDNRSSIFDAKAGIALSDNFVKLVSWYDNEWGYSSRVIDLIVHMASTV.

Residues 16–17, Asp-38, and Arg-85 each bind NAD(+); that span reads RI. D-glyceraldehyde 3-phosphate contacts are provided by residues 156–158, Thr-187, 216–217, and Arg-239; these read SCT and TG. Catalysis depends on Cys-157, which acts as the Nucleophile. An NAD(+)-binding site is contributed by Asn-321.

It belongs to the glyceraldehyde-3-phosphate dehydrogenase family. In terms of assembly, homotetramer.

It is found in the cytoplasm. It catalyses the reaction D-glyceraldehyde 3-phosphate + phosphate + NAD(+) = (2R)-3-phospho-glyceroyl phosphate + NADH + H(+). It participates in carbohydrate degradation; glycolysis; pyruvate from D-glyceraldehyde 3-phosphate: step 1/5. Key enzyme in glycolysis that catalyzes the first step of the pathway by converting D-glyceraldehyde 3-phosphate (G3P) into 3-phospho-D-glyceroyl phosphate. Essential for the maintenance of cellular ATP levels and carbohydrate metabolism. This chain is Glyceraldehyde-3-phosphate dehydrogenase, cytosolic, found in Ginkgo biloba (Ginkgo).